Consider the following 286-residue polypeptide: Putative type II secretion system L-type protein YghE (286 aa).

Residues 136–156 (VMILPILLILVALAVERGVTL) form a helical membrane-spanning segment.

Belongs to the GSP L family.

It localises to the cell inner membrane. Functionally, involved in a type II secretion system (T2SS, formerly general secretion pathway, GSP) for the export of folded proteins across the outer membrane. The sequence is that of Putative type II secretion system L-type protein YghE from Escherichia coli (strain K12).